The primary structure comprises 110 residues: Class I hydrophobin Po.HYD (110 aa).

An N-terminal signal peptide occupies residues 1 to 27 (MFSKATLFFTTVSRYRDTQAPIPTGQT). Intrachain disulfides connect cysteine 35–cysteine 91, cysteine 42–cysteine 85, cysteine 43–cysteine 75, and cysteine 92–cysteine 105.

The protein belongs to the fungal hydrophobin family. Self-assembles to form functional amyloid fibrils called rodlets. Self-assembly into fibrillar rodlets occurs spontaneously at hydrophobic:hydrophilic interfaces and the rodlets further associate laterally to form amphipathic monolayers.

It localises to the secreted. It is found in the cell wall. Its function is as follows. Aerial growth, conidiation, and dispersal of filamentous fungi in the environment rely upon a capability of their secreting small amphipathic proteins called hydrophobins (HPBs) with low sequence identity. Class I can self-assemble into an outermost layer of rodlet bundles on aerial cell surfaces, conferring cellular hydrophobicity that supports fungal growth, development and dispersal; whereas Class II form highly ordered films at water-air interfaces through intermolecular interactions but contribute nothing to the rodlet structure. The sequence is that of Class I hydrophobin Po.HYD from Pleurotus ostreatus (Oyster mushroom).